The primary structure comprises 315 residues: Tubulin beta-1 chain (315 aa).

Residues Ser6, Gly10, Thr11, Gly12, Asn72, and Asn94 each coordinate GTP. A disordered region spans residues 295 to 315 (DATADEEEYYEDEEEEEAQGM). A compositionally biased stretch (acidic residues) spans 297–315 (TADEEEYYEDEEEEEAQGM).

This sequence belongs to the tubulin family. Dimer of alpha and beta chains. A typical microtubule is a hollow water-filled tube with an outer diameter of 25 nm and an inner diameter of 15 nM. Alpha-beta heterodimers associate head-to-tail to form protofilaments running lengthwise along the microtubule wall with the beta-tubulin subunit facing the microtubule plus end conferring a structural polarity. Microtubules usually have 13 protofilaments but different protofilament numbers can be found in some organisms and specialized cells. Mg(2+) serves as cofactor.

The protein localises to the cytoplasm. The protein resides in the cytoskeleton. Its function is as follows. Tubulin is the major constituent of microtubules, a cylinder consisting of laterally associated linear protofilaments composed of alpha- and beta-tubulin heterodimers. Microtubules grow by the addition of GTP-tubulin dimers to the microtubule end, where a stabilizing cap forms. Below the cap, tubulin dimers are in GDP-bound state, owing to GTPase activity of alpha-tubulin. This is Tubulin beta-1 chain (TUBB1) from Daucus carota (Wild carrot).